Here is a 170-residue protein sequence, read N- to C-terminus: Protein AIG2 A (170 aa).

15–20 (YGSFQE) is a substrate binding site. Glu83 functions as the Proton acceptor in the catalytic mechanism. Residues 147 to 162 (KNPNGRSREEFEKFVQ) are compositionally biased toward basic and acidic residues. Residues 147 to 170 (KNPNGRSREEFEKFVQDDSSPASA) are disordered.

Belongs to the gamma-glutamylcyclotransferase family. As to expression, ubiquitous.

In terms of biological role, putative gamma-glutamylcyclotransferase. The polypeptide is Protein AIG2 A (Arabidopsis thaliana (Mouse-ear cress)).